A 469-amino-acid chain; its full sequence is Interstitial collagenase (469 aa).

A signal peptide spans 1-18; sequence MLSLPLLLLLLWGMGSHS. The propeptide at 19-99 is activation peptide; sequence FPTVPSETRE…PRCGVPDVAE (81 aa). A Cysteine switch motif is present at residues 90–97; it reads PRCGVPDV. Cysteine 92 is a binding site for Zn(2+). Ca(2+) contacts are provided by aspartate 124 and aspartate 158. Residues histidine 168 and aspartate 170 each contribute to the Zn(2+) site. Residues aspartate 175, glycine 176, glycine 178, and asparagine 180 each contribute to the Ca(2+) site. Histidine 183 lines the Zn(2+) pocket. Ca(2+) contacts are provided by arginine 190, glycine 192, and aspartate 194. Residue histidine 196 coordinates Zn(2+). Ca(2+) is bound by residues aspartate 198, glutamate 199, and glutamate 201. Residue histidine 218 coordinates Zn(2+). Glutamate 219 is an active-site residue. Positions 222 and 228 each coordinate Zn(2+). Phosphothreonine is present on threonine 274. Hemopexin repeat units follow at residues 275–324, 325–371, 374–422, and 423–466; these read PEVC…WPQL, PNGL…FGFP, VKNI…FPGI, and GDKV…WFNC. Cysteine 278 and cysteine 466 are joined by a disulfide. 2 residues coordinate Ca(2+): aspartate 285 and glutamine 329. Tyrosine 360 is modified (phosphotyrosine; by PKDCC). Ca(2+)-binding residues include aspartate 378 and aspartate 427.

It belongs to the peptidase M10A family. Requires Ca(2+) as cofactor. It depends on Zn(2+) as a cofactor. In terms of processing, tyrosine phosphorylated in platelets by PKDCC/VLK.

The protein localises to the secreted. Its subcellular location is the extracellular space. It localises to the extracellular matrix. The catalysed reaction is Cleavage of the triple helix of collagen at about three-quarters of the length of the molecule from the N-terminus, at 775-Gly-|-Ile-776 in the alpha1(I) chain. Cleaves synthetic substrates and alpha-macroglobulins at bonds where P1' is a hydrophobic residue.. With respect to regulation, can be activated without removal of the activation peptide. In terms of biological role, cleaves collagens of types I, II, and III at one site in the helical domain. Also cleaves collagens of types VII and X. The sequence is that of Interstitial collagenase (MMP1) from Equus caballus (Horse).